A 700-amino-acid chain; its full sequence is ATP-dependent zinc metalloprotease FtsH (700 aa).

Over Met1 to Arg10 the chain is Cytoplasmic. A helical membrane pass occupies residues Ser11–Gly31. Residues Asn32–Gly130 are Extracellular-facing. A helical transmembrane segment spans residues Phe131 to Leu151. Topologically, residues Met152 to Lys700 are cytoplasmic. An ATP-binding site is contributed by Gly227–Thr234. His449 is a Zn(2+) binding site. The active site involves Glu450. Residues His453 and Asp525 each coordinate Zn(2+). The interval Lys644 to Lys700 is disordered.

This sequence in the central section; belongs to the AAA ATPase family. The protein in the C-terminal section; belongs to the peptidase M41 family. As to quaternary structure, homohexamer. Zn(2+) serves as cofactor.

The protein resides in the cell membrane. Its function is as follows. Acts as a processive, ATP-dependent zinc metallopeptidase for both cytoplasmic and membrane proteins. Plays a role in the quality control of integral membrane proteins. The protein is ATP-dependent zinc metalloprotease FtsH of Leuconostoc mesenteroides subsp. mesenteroides (strain ATCC 8293 / DSM 20343 / BCRC 11652 / CCM 1803 / JCM 6124 / NCDO 523 / NBRC 100496 / NCIMB 8023 / NCTC 12954 / NRRL B-1118 / 37Y).